The sequence spans 234 residues: Ribonuclease 3 (234 aa).

An RNase III domain is found at 6-134 (RKSLEERVGH…IVGALYLDGG (129 aa)). Glu-47 lines the Mg(2+) pocket. The active site involves Asp-51. The Mg(2+) site is built by Ser-120 and Glu-123. Glu-123 is a catalytic residue. The 70-residue stretch at 162–231 (DYKTRLQELV…AKNALEMKYK (70 aa)) folds into the DRBM domain.

It belongs to the ribonuclease III family. Homodimer. Mg(2+) serves as cofactor.

The protein resides in the cytoplasm. It catalyses the reaction Endonucleolytic cleavage to 5'-phosphomonoester.. Its function is as follows. Digests double-stranded RNA. Involved in the processing of primary rRNA transcript to yield the immediate precursors to the large and small rRNAs (23S and 16S). Processes some mRNAs, and tRNAs when they are encoded in the rRNA operon. Processes pre-crRNA and tracrRNA of type II CRISPR loci if present in the organism. This chain is Ribonuclease 3, found in Bdellovibrio bacteriovorus (strain ATCC 15356 / DSM 50701 / NCIMB 9529 / HD100).